Consider the following 198-residue polypeptide: Integrator complex subunit 8-like protein (198 aa).

This sequence belongs to the Integrator subunit 8 family. Component of the Integrator complex. The core complex associates with protein phosphatase 2A subunits, to form the Integrator-PP2A (INTAC) complex.

It is found in the nucleus. It localises to the chromosome. Component of the integrator complex, a multiprotein complex that terminates RNA polymerase II (Pol II) transcription in the promoter-proximal region of genes. The integrator complex provides a quality checkpoint during transcription elongation by driving premature transcription termination of transcripts that are unfavorably configured for transcriptional elongation: the complex terminates transcription by (1) catalyzing dephosphorylation of the C-terminal domain (CTD) of Pol II subunit polr2a, (2) degrading the exiting nascent RNA transcript via endonuclease activity and (3) promoting the release of Pol II from bound DNA. The integrator complex is also involved in terminating the synthesis of non-coding Pol II transcripts, such as enhancer RNAs (eRNAs), small nuclear RNAs (snRNAs), telomerase RNAs and long non-coding RNAs (lncRNAs). Within the integrator complex, INTS8 is required for the recruitment of protein phosphatase 2A (PP2A) to transcription pause-release checkpoint. This Dictyostelium discoideum (Social amoeba) protein is Integrator complex subunit 8-like protein.